Here is a 925-residue protein sequence, read N- to C-terminus: ETO1-like protein 2 (925 aa).

Residues 207–307 (SDISFCVGSE…ECEARLAASV (101 aa)) form the BTB domain. One copy of the TPR 1 repeat lies at 409 to 442 (ALSLHQMGCVLFERKDYKAAQFHFRLASSLGHVY). Residues 509 to 533 (KYRAVMKFEQKQIKEAFQEIDRLIQ) adopt a coiled-coil conformation. TPR repeat units follow at residues 538 to 571 (PECLELRAWLYLATGDRESCLRDLRAVLSLEPNY), 664 to 697 (AERLVYEGWLLYDMGYVEETLTKAEEAISIQRSF), 738 to 771 (GQALNNLGSIYINLGMLDQAETAYKNAIEIKHIR), 773 to 803 (RQGLARVYFLKNQRKEACEEMTKLIEKSCSK), 834 to 867 (TYPYRYRAAVLMDDQRETEAVEELSKAIAFRPEL), and 869 to 900 (TLHLRAAFHEATGNLSLATQDCEAALCLDPNH).

The protein belongs to the ETO1 family. As to quaternary structure, interacts with the C-terminal domain of ACS5. In terms of tissue distribution, constitutively expressed in green and etiolated seedlings.

It functions in the pathway protein modification; protein ubiquitination. In terms of biological role, potential regulator of the ethylene pathway, which acts by regulating the stability of 1-aminocyclopropane-1-carboxylate synthase (ACS) enzymes. May act as a substrate-specific adapter that connects ACS enzymes, such as ACS5, to ubiquitin ligase complexes, leading to proteasomal degradation of ACS enzymes. This chain is ETO1-like protein 2 (EOL2), found in Arabidopsis thaliana (Mouse-ear cress).